Consider the following 69-residue polypeptide: Large ribosomal subunit protein uL29 (69 aa).

It belongs to the universal ribosomal protein uL29 family.

The protein is Large ribosomal subunit protein uL29 of Granulibacter bethesdensis (strain ATCC BAA-1260 / CGDNIH1).